Consider the following 434-residue polypeptide: Protein POLLENLESS 3 (434 aa).

A disordered region spans residues 13–47; that stretch reads VYYTPPPARTSDHVAAMPMTERRRPPYSCSSSSER. The Nuclear localization signal 1 motif lies at 34–37; the sequence is RRRP. TPR repeat units follow at residues 95 to 131, 133 to 164, 191 to 224, and 241 to 274; these read DSAL…ESQD, IDNL…LEQG, ARIL…ERDK, and PEAK…AVEM. Residues 142–166 are a coiled coil; that stretch reads KKSGRIEEEAVLLEHKLQTLEQGMG. The disordered stretch occupies residues 309–329; that stretch reads TANKNYSDVSSSPASVRPNSA. Positions 310-326 are enriched in polar residues; that stretch reads ANKNYSDVSSSPASVRP. Residues 377 to 380 carry the Nuclear localization signal 2 motif; sequence KRKK. Residues 393–408 are compositionally biased toward basic and acidic residues; it reads VKDTADGPKSESKKSW. The interval 393-434 is disordered; that stretch reads VKDTADGPKSESKKSWADIAEEEEAEEEEEERLQGELKTAEM. Positions 408–434 form a coiled coil; sequence WADIAEEEEAEEEEEERLQGELKTAEM. Positions 411 to 423 are enriched in acidic residues; sequence IAEEEEAEEEEEE. A compositionally biased stretch (basic and acidic residues) spans 424 to 434; it reads RLQGELKTAEM.

This sequence belongs to the MS5 protein family. Expressed at low levels mostly in floral organs during meiosis. Also barely detectable in leaves, stems and roots.

The protein localises to the nucleus. Its function is as follows. Essential for male fertility, especially for microspore and pollen grain production. Involved in the regulation of cell division after male meiosis I and II to facilitate exit from meiosis and transition to G1. The polypeptide is Protein POLLENLESS 3 (Arabidopsis thaliana (Mouse-ear cress)).